The sequence spans 698 residues: Sucrose non-fermenting protein kinase 1 (698 aa).

The tract at residues 1 to 48 is disordered; sequence MAPRGFEDEELTISLSSSHVRRPQQQQPPPPTQQQHAHQPGSRPADAP. The Protein kinase domain maps to 62–313; the sequence is YKVLRTLGEG…IEDIRADPWF (252 aa). ATP-binding positions include 68–76 and Lys-91; that span reads LGEGSFGKV. Asp-184 (proton acceptor) is an active-site residue. An auto-inhibitory domain (AID) region spans residues 320-417; it reads YLQLPVEEFF…ALLEPEGSSP (98 aa). The region spanning 360–397 is the UBA domain; it reads VTEKISKTMGYGKNDVEEALQASEPSAIKDAYMIVREN. 3 disordered regions span residues 410 to 435, 482 to 525, and 564 to 597; these read LEPE…TTTA, TRTD…KKTK, and ESRH…IDPM. Low complexity predominate over residues 415–435; it reads SSPMLSMSSARSATSTTTTTA. Basic and acidic residues-rich tracts occupy residues 484–493 and 564–573; these read TDAEKEETSR and ESRHAEERAE.

The protein belongs to the protein kinase superfamily. CAMK Ser/Thr protein kinase family. SNF1 subfamily. Component of the AMP-activated protein kinase complex also known as the SNF1 kinase complex (Snf1c), a heterotrimeric complex composed of a catalytic subunit alpha and 2 regulatory subunits beta and gamma.

Its subcellular location is the cytoplasm. It is found in the nucleus. The enzyme catalyses L-seryl-[protein] + ATP = O-phospho-L-seryl-[protein] + ADP + H(+). It carries out the reaction L-threonyl-[protein] + ATP = O-phospho-L-threonyl-[protein] + ADP + H(+). Catalytic subunit of the AMP-activated protein kinase complex also known as the SNF1 kinase complex (Snf1c), a central regulator of cellular energy homeostasis, which, in response to a fall in intracellular ATP levels, activates energy-producing pathways and inhibits energy-consuming processes. The complex phosphorylates histone H3 to form H3S10ph, which promotes H3K14ac formation, leading to transcriptional activation through TBP recruitment to the promoters. Activates the expression of the galactose oxidase (GOA) gene and of several cell wall-degrading enzymes (CWDEs) such as pectate lyase, xylanase and glucanase. Plays an important role in sudden death syndrome (SDS) by controlling the colonization of the infected roots. This chain is Sucrose non-fermenting protein kinase 1, found in Fusarium virguliforme.